Here is a 177-residue protein sequence, read N- to C-terminus: MSKKKDQVLLNEQIDAPEVRCVGDDGTQYGIVSRDEALKIAEQKGLDLVLIAPNANPPVCKIMDYGKFKYQQEKKLKEAKKKQTKIEVKEIKLSVKIAQNDIDYKVKHAREFLEKGKHVKFRVFLRGREMAHPEAGVEVLEKIIPLIEDIGVVEKKPHLEGRYVNMLVIPKKEEKKK.

It belongs to the IF-3 family. In terms of assembly, monomer.

Its subcellular location is the cytoplasm. IF-3 binds to the 30S ribosomal subunit and shifts the equilibrium between 70S ribosomes and their 50S and 30S subunits in favor of the free subunits, thus enhancing the availability of 30S subunits on which protein synthesis initiation begins. The protein is Translation initiation factor IF-3 of Nitratiruptor sp. (strain SB155-2).